Consider the following 440-residue polypeptide: Ribosomal protein uS12 methylthiotransferase RimO (440 aa).

The MTTase N-terminal domain occupies 2–117 (VKVGFVSLGC…LPNVIKKLYE (116 aa)). [4Fe-4S] cluster is bound by residues cysteine 11, cysteine 47, cysteine 80, cysteine 156, cysteine 160, and cysteine 163. Residues 142-371 (ATPKFYAYIK…LNLQRKISLE (230 aa)) enclose the Radical SAM core domain. One can recognise a TRAM domain in the interval 374–440 (RKRISKKYEV…FEYDLVGEVI (67 aa)).

The protein belongs to the methylthiotransferase family. RimO subfamily. [4Fe-4S] cluster serves as cofactor.

Its subcellular location is the cytoplasm. It catalyses the reaction L-aspartate(89)-[ribosomal protein uS12]-hydrogen + (sulfur carrier)-SH + AH2 + 2 S-adenosyl-L-methionine = 3-methylsulfanyl-L-aspartate(89)-[ribosomal protein uS12]-hydrogen + (sulfur carrier)-H + 5'-deoxyadenosine + L-methionine + A + S-adenosyl-L-homocysteine + 2 H(+). Its function is as follows. Catalyzes the methylthiolation of an aspartic acid residue of ribosomal protein uS12. The protein is Ribosomal protein uS12 methylthiotransferase RimO of Caldicellulosiruptor saccharolyticus (strain ATCC 43494 / DSM 8903 / Tp8T 6331).